The sequence spans 71 residues: ATP synthase F(0) complex subunit e, mitochondrial (71 aa).

An N6-acetyllysine modification is found at Lys-34.

Belongs to the ATPase e subunit family. Component of the ATP synthase complex composed at least of ATP5F1A/subunit alpha, ATP5F1B/subunit beta, ATP5MC1/subunit c (homooctomer), MT-ATP6/subunit a, MT-ATP8/subunit 8, ATP5ME/subunit e, ATP5MF/subunit f, ATP5MG/subunit g, ATP5MK/subunit k, ATP5MJ/subunit j, ATP5F1C/subunit gamma, ATP5F1D/subunit delta, ATP5F1E/subunit epsilon, ATP5PF/subunit F6, ATP5PB/subunit b, ATP5PD/subunit d, ATP5PO/subunit OSCP. ATP synthase complex consists of a soluble F(1) head domain (subunits alpha(3) and beta(3)) - the catalytic core - and a membrane F(0) domain - the membrane proton channel (subunits c, a, 8, e, f, g, k and j). These two domains are linked by a central stalk (subunits gamma, delta, and epsilon) rotating inside the F1 region and a stationary peripheral stalk (subunits F6, b, d, and OSCP).

The protein resides in the mitochondrion. Its subcellular location is the mitochondrion inner membrane. Subunit e, of the mitochondrial membrane ATP synthase complex (F(1)F(0) ATP synthase or Complex V) that produces ATP from ADP in the presence of a proton gradient across the membrane which is generated by electron transport complexes of the respiratory chain. ATP synthase complex consist of a soluble F(1) head domain - the catalytic core - and a membrane F(1) domain - the membrane proton channel. These two domains are linked by a central stalk rotating inside the F(1) region and a stationary peripheral stalk. During catalysis, ATP synthesis in the catalytic domain of F(1) is coupled via a rotary mechanism of the central stalk subunits to proton translocation. In vivo, can only synthesize ATP although its ATP hydrolase activity can be activated artificially in vitro. Part of the complex F(0) domain. The chain is ATP synthase F(0) complex subunit e, mitochondrial from Bos taurus (Bovine).